The primary structure comprises 354 residues: Uroporphyrinogen decarboxylase (354 aa).

Residues 27–31 (RQAGR), D77, Y154, T209, and H327 contribute to the substrate site.

It belongs to the uroporphyrinogen decarboxylase family. As to quaternary structure, homodimer.

The protein localises to the cytoplasm. It catalyses the reaction uroporphyrinogen III + 4 H(+) = coproporphyrinogen III + 4 CO2. It participates in porphyrin-containing compound metabolism; protoporphyrin-IX biosynthesis; coproporphyrinogen-III from 5-aminolevulinate: step 4/4. Functionally, catalyzes the decarboxylation of four acetate groups of uroporphyrinogen-III to yield coproporphyrinogen-III. This is Uroporphyrinogen decarboxylase from Escherichia fergusonii (strain ATCC 35469 / DSM 13698 / CCUG 18766 / IAM 14443 / JCM 21226 / LMG 7866 / NBRC 102419 / NCTC 12128 / CDC 0568-73).